Here is a 266-residue protein sequence, read N- to C-terminus: Nitrate import ATP-binding protein NrtD (266 aa).

An ABC transporter domain is found at 3–234; the sequence is LEITDLNRVF…DEETPKNRTY (232 aa). 39 to 46 provides a ligand contact to ATP; it reads GASGSGKS.

The protein belongs to the ABC transporter superfamily. Nitrate/nitrite/cyanate uptake transporter (NitT) (TC 3.A.1.16) family. In terms of assembly, the complex is composed of two ATP-binding proteins (NrtC and NrtD), two transmembrane proteins (NrtB) and a solute-binding protein (NrtA).

It is found in the cell inner membrane. It carries out the reaction nitrate(out) + ATP + H2O = nitrate(in) + ADP + phosphate + H(+). In terms of biological role, part of the ABC transporter complex NrtABCD involved in nitrate uptake. The complex is probably also involved in nitrite transport. Probably responsible for energy coupling to the transport system. The sequence is that of Nitrate import ATP-binding protein NrtD (nrtD) from Synechocystis sp. (strain ATCC 27184 / PCC 6803 / Kazusa).